A 469-amino-acid polypeptide reads, in one-letter code: Probable indole-3-acetic acid-amido synthetase GH3.13 (469 aa).

The segment at 1–26 (MTSTSSENAPDHDHDHDASSPAPATA) is disordered. Basic and acidic residues predominate over residues 9 to 18 (APDHDHDHDA).

Belongs to the IAA-amido conjugating enzyme family.

Functionally, may catalyze the synthesis of indole-3-acetic acid (IAA)-amino acid conjugates, providing a mechanism for the plant to cope with the presence of excess auxin. The protein is Probable indole-3-acetic acid-amido synthetase GH3.13 (GH3.13) of Oryza sativa subsp. japonica (Rice).